Here is a 434-residue protein sequence, read N- to C-terminus: ATP-dependent protease ATPase subunit HslU (434 aa).

ATP-binding positions include isoleucine 18, 60 to 65, aspartate 247, glutamate 312, and arginine 384; that span reads GVGKTE.

The protein belongs to the ClpX chaperone family. HslU subfamily. As to quaternary structure, a double ring-shaped homohexamer of HslV is capped on each side by a ring-shaped HslU homohexamer. The assembly of the HslU/HslV complex is dependent on binding of ATP.

It is found in the cytoplasm. ATPase subunit of a proteasome-like degradation complex; this subunit has chaperone activity. The binding of ATP and its subsequent hydrolysis by HslU are essential for unfolding of protein substrates subsequently hydrolyzed by HslV. HslU recognizes the N-terminal part of its protein substrates and unfolds these before they are guided to HslV for hydrolysis. In Brucella suis (strain ATCC 23445 / NCTC 10510), this protein is ATP-dependent protease ATPase subunit HslU.